A 475-amino-acid chain; its full sequence is Sensor histidine kinase GlrK (475 aa).

Topologically, residues 1–13 (MKRWPVFPRSLRQ) are cytoplasmic. A helical membrane pass occupies residues 14–34 (LVMLAFLLILLPLLVLAWQAW). At 35-173 (QSLNALSDQA…LQREIAERGQ (139 aa)) the chain is on the periplasmic side. The chain crosses the membrane as a helical span at residues 174–194 (YFGWQSLVLFLVSLVMVLLFT). The Cytoplasmic portion of the chain corresponds to 195 to 475 (RMIIGPVKNI…IELPSSKNTK (281 aa)). Positions 256–472 (HLSHELKTPL…CFRIELPSSK (217 aa)) constitute a Histidine kinase domain. H259 is subject to Phosphohistidine; by autocatalysis.

Autophosphorylated.

Its subcellular location is the cell inner membrane. The catalysed reaction is ATP + protein L-histidine = ADP + protein N-phospho-L-histidine.. Functionally, member of the two-component regulatory system GlrR/GlrK that up-regulates transcription of the glmY sRNA when cells enter the stationary growth phase. Activates GlrR by phosphorylation. The polypeptide is Sensor histidine kinase GlrK (glrK) (Escherichia coli (strain K12)).